We begin with the raw amino-acid sequence, 132 residues long: Small ribosomal subunit protein uS9 (132 aa).

The protein belongs to the universal ribosomal protein uS9 family.

The chain is Small ribosomal subunit protein uS9 (rpsI) from Mycoplasma pneumoniae (strain ATCC 29342 / M129 / Subtype 1) (Mycoplasmoides pneumoniae).